We begin with the raw amino-acid sequence, 481 residues long: U6 small nuclear RNA (adenine-(43)-N(6))-methyltransferase (481 aa).

S-adenosyl-L-methionine contacts are provided by lysine 82, glycine 108, aspartate 131, threonine 164, and asparagine 184.

This sequence belongs to the methyltransferase superfamily. METTL16/RlmF family. In terms of assembly, self-associates. Interacts with dlc-1; the interaction is direct, and is required for nuclear localization of mett-10.

It is found in the nucleus. The catalysed reaction is an adenosine in mRNA + S-adenosyl-L-methionine = an N(6)-methyladenosine in mRNA + S-adenosyl-L-homocysteine + H(+). It carries out the reaction adenosine in U6 snRNA + S-adenosyl-L-methionine = N(6)-methyladenosine in U6 snRNA + S-adenosyl-L-homocysteine + H(+). Functionally, RNA N6-methyltransferase that methylates adenosine residues at the N(6) position of a subset of RNAs and is involved in S-adenosyl-L-methionine homeostasis by regulating splicing of S-adenosylmethionine synthase transcripts (sams-3, sams-4 and sams-5). Able to N6-methylate a subset of mRNAs containing the 5'UACAGAAAC-3' nonamer sequence. Plays a key role in S-adenosyl-L-methionine homeostasis: under rich-diet conditions, catalyzes N6-methylation of S-adenosylmethionine synthase mRNAs (sams-3, sams-4 and sams-5), directly inhibiting splicing and protein production of S-adenosylmethionine synthase. In addition to mRNAs, also able to mediate N6-methylation of U6 small nuclear RNA (U6 snRNA). Required for gamete production, inhibiting germ cell proliferative fate and ensuring germ cell meiotic development. Also promotes progression of the mitotic cell cycle in those germ cells that continue to proliferate. Plays a role in the development of the vulva, somatic gonad and embryo. The chain is U6 small nuclear RNA (adenine-(43)-N(6))-methyltransferase from Caenorhabditis briggsae.